Consider the following 1649-residue polypeptide: MAGGRGAAGRGPAEPQESYSQRQDHELQALEAIYGSDFQDLRPDARGRVREPPEINLVLYPQGLAGEEVYVQVELRVKCPPTYPDVVPEIELKNTKGLSNESVNLLKSHLEELAKKQCGEVMIFELAHHVQSFLSEHNKPPPKSFHEEMLERQAQEKQQRLLEARQKEEQEQREILHEIQKRKEEIKEEKKRKEMAKQERLEITSLTNQDHASKRDPAGHRAAAFLHGGSPDFVGNGKARAHSSGRSRRERQYSVCSGEASPGSCDILYFCVGSADQLMVHKGKCVGSDEQLGKVVYNALETATGSFVLLYEWVLQWQKKMGPCLTSQEKEKIDKCKKQIQGAETEFSSLVKLSHPNIVRYFAMNSREEKDSIVVDILAEHISGISLAAHLSHSGPVPMHQLRKYTAQLLAGLDYLHRNSVVHKVLSTASVLVDAEGTVKITDYSISKRLADICKEDVFEQTRVRFSDSALPYKTGKKGDVWRLGLLLLSLSQGQECEEYPVTIPSDLPADFQDFLKKCVCLDDKERWSPQQLLKHSFINPQPKMPLVEQSPEDSGGQDYIETIIPSNQLPSAAFFTETQRQFSRYFIEFEELQLLGKGAFGAVIKVQNKLDGCCYAVKRIPINPASRQFRRIKGEVTLLSRLHHENIVRYYNAWIERHERPAVPGTPPPDYIPQAQNSSATGGKASGDTEELGSVEAAAPPPILSSSVEWSTSAERSNSARFPVTGQDSSSDEEDEDERDGVFSQSFLPASDSDSDIIFDNEDENSKSQNQDEDCNEKDSRHEIEPSVTTEAVHYLYIQMEYCEKSTLRDTIDQGLFRDTSRLWRLFREILDGLAYIHEKGMIHRDLKPVNIFLDSDDHVKIGDFGLATDHLAFNAEGKQDDQAGDHVIKSDPSGHLTGMVGTALYVSPEVQGSTKSAYNQKVDLFSLGIILFEMSYHPMVTASERIFVLNQLRDPTSPKFPDDFEDGEHTKQKSVISWLLNHDPAKRPTAMELLKSELLPPPQMEESELHEVLHHTLANTDGKAYRTMMSQLFCQHSSPAIDYTYDSDILKGNFLIRTAKIQQLVCETIVRVFKRHGAVQLCTPLLLPRNRQIYEHNEAALFMDHSGMLVMLPFDLRVPFARYVARNNILNLKRYCIERVFRPRKLDRFHPKELLECAFDIVTSTANSSLPTAETIYTIYEVIQEFPALQERNYSIYLNHTMLLKAILLHCGIPEDKLSQVYVILYDAVTEKLTRREVEAKFCNLSLSSNSLCRLYKFIEQKGDLQDLTPTINSLIKQKTGIAQLVKYSLKDLEEVVGLLKKLGVKLQVSINLGLVYKVQQHNGIIFQFLAFSKRRQRVVPEILAAGGRYDLLIPKFRGPQALGPVPTAVGVSIAIDKIFAAVLNMGEPVTVSSCDLLVVSAGQMSMSRAINLTQKLWTAGITAEIMYDWSQSQEELQEYCRHHEITYVALVSDKEGSHVKVKSFEKERQTEKRVLESDLVDHVMQKLRTKVGDERNFRDASDNLAVQTLKGSFSNASGLFEIHGTTVVPTVSVISPEKLSASTRRRHEIQVQTRLQTTLANLHQKSSEIEILAVDLPKETILQFLSLEWDADEQAFNTTVKQLLSRLPKQRYLKLVCDEIYNIKVEKKVSVLFLYSYRDDYYRILF.

A disordered region spans residues 1–26 (MAGGRGAAGRGPAEPQESYSQRQDHE). In terms of domain architecture, RWD spans 25-137 (HELQALEAIY…HHVQSFLSEH (113 aa)). A coiled-coil region spans residues 146-205 (HEEMLERQAQEKQQRLLEARQKEEQEQREILHEIQKRKEEIKEEKKRKEMAKQERLEITS). Residues 227–260 (HGGSPDFVGNGKARAHSSGRSRRERQYSVCSGEA) are disordered. Ser-230 carries the phosphoserine modification. Over residues 239-249 (ARAHSSGRSRR) the composition is skewed to basic residues. 2 consecutive Protein kinase domains span residues 296–539 (VYNA…HSFI) and 590–1001 (FEEL…SELL). Residues 596–604 (LGKGAFGAV) and Lys-619 contribute to the ATP site. The interval 662-785 (PAVPGTPPPD…CNEKDSRHEI (124 aa)) is disordered. Thr-667 is subject to Phosphothreonine. Residues 705–721 (LSSSVEWSTSAERSNSA) show a composition bias toward polar residues. 2 stretches are compositionally biased toward acidic residues: residues 731–740 (SSDEEDEDER) and 754–764 (SDSDIIFDNED). Asp-847 serves as the catalytic Proton acceptor. Thr-870 carries the post-translational modification Phosphothreonine. 2 positions are modified to phosphothreonine; by autocatalysis: Thr-899 and Thr-904. The tract at residues 1022–1493 (TDGKAYRTMM…DHVMQKLRTK (472 aa)) is histidyl-tRNA synthetase-like. Lys-1259 is modified (N6-acetyllysine).

The protein belongs to the protein kinase superfamily. Ser/Thr protein kinase family. GCN2 subfamily. In terms of assembly, homodimer; homodimerization is important for kinase activation by uncharged tRNAs. Interacts with GCN1; this interaction stimulates EIF2AK4/GCN2 kinase activity and is impaired by IMPACT upon a variety of stress conditions, such as amino acid depletion, UV-C irradiation, proteasome inhibitor treatment and glucose deprivation. Interacts with DNAJC3; this interaction inhibits EIF2AK4/GCN2 kinase activity during endoplasmic reticulum (ER), hypothermic and amino acid-starving stress conditions. Interacts with MAP3K20; activates EIF2AK4/GCN2 kinase activity in response to moderate ribotoxic stress. Post-translationally, autophosphorylated; autophosphorylation on Thr-899 is increased upon amino acid starvation and in UV irradiation cells and inhibited in presence of IMPACT.

The protein resides in the cytoplasm. The enzyme catalyses L-seryl-[protein] + ATP = O-phospho-L-seryl-[protein] + ADP + H(+). It carries out the reaction L-threonyl-[protein] + ATP = O-phospho-L-threonyl-[protein] + ADP + H(+). In terms of biological role, metabolic-stress sensing protein kinase that phosphorylates the alpha subunit of eukaryotic translation initiation factor 2 (EIF2S1/eIF-2-alpha) in response to low amino acid availability. Plays a role as an activator of the integrated stress response (ISR) required for adaptation to amino acid starvation. EIF2S1/eIF-2-alpha phosphorylation in response to stress converts EIF2S1/eIF-2-alpha into a global protein synthesis inhibitor, leading to a global attenuation of cap-dependent translation, and thus to a reduced overall utilization of amino acids, while concomitantly initiating the preferential translation of ISR-specific mRNAs, such as the transcriptional activator ATF4, and hence allowing ATF4-mediated reprogramming of amino acid biosynthetic gene expression to alleviate nutrient depletion. Required for the translational induction of protein kinase PRKCH following amino acid starvation. Binds uncharged tRNAs. Involved in cell cycle arrest by promoting cyclin D1 mRNA translation repression after the unfolded protein response pathway (UPR) activation or cell cycle inhibitor CDKN1A/p21 mRNA translation activation in response to amino acid deprivation. Plays a role in the consolidation of synaptic plasticity, learning as well as formation of long-term memory. Plays a role in neurite outgrowth inhibition. Plays a role in feeding behavior to maintain amino acid homeostasis; contributes to the innate aversion toward diets of imbalanced amino acid composition. Plays a proapoptotic role in response to glucose deprivation. Promotes global cellular protein synthesis repression in response to UV irradiation independently of the stress-activated protein kinase/c-Jun N-terminal kinase (SAPK/JNK) and p38 MAPK signaling pathways. Plays a role in the antiviral response against alphavirus infection; impairs early viral mRNA translation of the incoming genomic virus RNA, thus preventing alphavirus replication. This Rattus norvegicus (Rat) protein is eIF-2-alpha kinase GCN2.